The primary structure comprises 268 residues: NH(3)-dependent NAD(+) synthetase (268 aa).

Residue 46-53 (GVSGGQDS) participates in ATP binding. D52 contacts Mg(2+). R140 serves as a coordination point for deamido-NAD(+). T160 is an ATP binding site. E165 contributes to the Mg(2+) binding site. Deamido-NAD(+) is bound by residues K173 and D180. K189 is a binding site for ATP. 260-261 (HK) is a binding site for deamido-NAD(+).

Belongs to the NAD synthetase family. As to quaternary structure, homodimer.

It carries out the reaction deamido-NAD(+) + NH4(+) + ATP = AMP + diphosphate + NAD(+) + H(+). Its pathway is cofactor biosynthesis; NAD(+) biosynthesis; NAD(+) from deamido-NAD(+) (ammonia route): step 1/1. Catalyzes the ATP-dependent amidation of deamido-NAD to form NAD. Uses ammonia as a nitrogen source. The polypeptide is NH(3)-dependent NAD(+) synthetase (Buchnera aphidicola subsp. Acyrthosiphon pisum (strain APS) (Acyrthosiphon pisum symbiotic bacterium)).